The primary structure comprises 69 residues: Atypical cationic antimicrobial peptide (69 aa).

Residues M1–C22 form the signal peptide. Positions D23–R45 are excised as a propeptide. Positions E25–R45 are disordered. The segment covering E30–Q40 has biased composition (acidic residues).

The protein belongs to the frog skin active peptide (FSAP) family. Monomer and/or weakly self-associated, oligomer, and amyloid-like fibril. Can adopt a monomeric nonamphipathic alpha-helical conformation, possibly with the aid of its cationic N- and C-termini, when bound to anionic membranes. Forms stable and ordered beta-sheet aggregates in aqueous environment or when bound to anionic or zwitterionic phospholipid vesicles. As to expression, expressed by the skin glands.

It is found in the secreted. The protein localises to the target cell membrane. In terms of biological role, atypical cationic antimicrobial peptide with potent activity against Gram-negative and Gram-positive bacteria. Acts by inducing permeabilization of bacterial membrane. In vitro, also shows chemoattractant activity, which is mediated through a G protein-coupled receptor (probably FPR2 coupled to the ERK1/2 MAPK kinase pathway). Has slow-kinetic self-association and amyloid-like properties that modulate its activity. The soluble, weakly self-associated forms act on leukocytes to promote chemotaxis but have low antibacterial activity, the oligomers exhibit potent antimicrobial activity, whereas the amyloid-like fibrils have a very weak antibacterial activity. The membrane composition has a great influence on the peptide behavior. The peptide induces membrane leakage and insertion to a lesser extent in model membranes of the anionic lipid phosphatidylglycerol (PG) than in the model membranes of the zwitterionic lipid phosphatidylcholine (PC) vesicles. It forms more fibrils in PC than in PG. Membrane perturbations are more observed in the presence of PG than in the presence of PC. The peptide shows low hemolytic activity. The polypeptide is Atypical cationic antimicrobial peptide (Phyllomedusa sauvagei (Sauvage's leaf frog)).